The sequence spans 699 residues: D-(-)-3-hydroxybutyrate oligomer hydrolase (699 aa).

The signal sequence occupies residues 1 to 19; sequence MNPSLCIAVAFACPLSALA. S303 functions as the Charge relay system in the catalytic mechanism.

It belongs to the D-(-)-3-hydroxybutyrate oligomer hydrolase family.

Its subcellular location is the secreted. The catalysed reaction is (3R)-hydroxybutanoate dimer + H2O = 2 (R)-3-hydroxybutanoate + H(+). It functions in the pathway lipid metabolism; butanoate metabolism. Functionally, participates in the degradation of poly-3-hydroxybutyrate (PHB). It works downstream of poly(3-hydroxybutyrate) depolymerase, hydrolyzing D(-)-3-hydroxybutyrate oligomers of various length (3HB-oligomers) into 3HB-monomers. The sequence is that of D-(-)-3-hydroxybutyrate oligomer hydrolase from Azoarcus sp. (strain BH72).